The sequence spans 591 residues: F420 non-reducing hydrogenase II large subunit (591 aa).

Glutamate 42 contributes to the Mg(2+) binding site. Ni(2+) contacts are provided by cysteine 61, cysteine 64, cysteine 569, and cysteine 572. Cysteine 64 is a Fe cation binding site. Cysteine 572 is a Fe cation binding site. Histidine 575 contributes to the Mg(2+) binding site.

It belongs to the [NiFe]/[NiFeSe] hydrogenase large subunit family. As to quaternary structure, composed of a large subunit (VhtA), a small subunit (VhtG) and a cytochrome subunit (VhtC). The cofactor is Ni(2+). It depends on Fe cation as a cofactor.

It localises to the cell membrane. It catalyses the reaction methanophenazine + H2 = dihydromethanophenazine. Functionally, part of the F420 non-reducing hydrogenase II complex that catalyzes the reduction of methanophenazine to dihydromethanophenazine. The sequence is that of F420 non-reducing hydrogenase II large subunit from Methanosarcina mazei (strain ATCC BAA-159 / DSM 3647 / Goe1 / Go1 / JCM 11833 / OCM 88) (Methanosarcina frisia).